The primary structure comprises 131 residues: Large ribosomal subunit protein bL17 (131 aa).

Belongs to the bacterial ribosomal protein bL17 family. Part of the 50S ribosomal subunit. Contacts protein L32.

This chain is Large ribosomal subunit protein bL17, found in Paraburkholderia phymatum (strain DSM 17167 / CIP 108236 / LMG 21445 / STM815) (Burkholderia phymatum).